A 408-amino-acid chain; its full sequence is UPF0754 membrane protein Tery_3973 (408 aa).

Transmembrane regions (helical) follow at residues 4–24 and 385–405; these read IWLYFVPPIAGGIIGYFTNDI and IVNLGGVLGVVVGSFQTILLV.

This sequence belongs to the UPF0754 family.

It localises to the cell inner membrane. The protein is UPF0754 membrane protein Tery_3973 of Trichodesmium erythraeum (strain IMS101).